Here is a 944-residue protein sequence, read N- to C-terminus: ATP-dependent RNA helicase DDX42 (944 aa).

Residues Met1–Gly18 are compositionally biased toward gly residues. Disordered stretches follow at residues Met1–Phe119, Met131–Asp155, and Glu182–Ile203. Over residues Ser35–Gly52 the composition is skewed to low complexity. Positions Asp70–Ser84 are enriched in acidic residues. Residues Met120–Gln157 are a coiled coil. Over residues Met131–Asp149 the composition is skewed to basic and acidic residues. A Q motif motif is present at residues Ser253–Cys281. Residues Val284–Val459 enclose the Helicase ATP-binding domain. Ala297–Thr304 serves as a coordination point for ATP. A DEAD box motif is present at residues Asp407–Asp410. One can recognise a Helicase C-terminal domain in the interval Trp487–Ala632. Disordered stretches follow at residues Arg642 to Asn682, Gly723 to Pro753, and Ser794 to Ser944. Positions Gly723–Ser737 are enriched in low complexity. A compositionally biased stretch (polar residues) spans Leu738–Asn752. Residues Ser794–Gly814 are compositionally biased toward low complexity. The span at Gly815–Ile824 shows a compositional bias: gly residues. Basic and acidic residues-rich tracts occupy residues Val825–Thr887 and Asn901–Thr926.

The protein belongs to the DEAD box helicase family. DDX42 subfamily. In terms of assembly, transient component of the SF3B subcomplex of the 17S U2 SnRNP complex.

The protein localises to the cytoplasm. Its subcellular location is the nucleus. It catalyses the reaction ATP + H2O = ADP + phosphate + H(+). ATP-dependent RNA helicase that binds to partially double-stranded RNAs (dsRNAs) in order to unwind RNA secondary structures. Unwinding is promoted in the presence of single-strand binding proteins. Also mediates RNA duplex formation thereby displacing the single-strand RNA binding protein. ATP and ADP modulate its activity: ATP binding and hydrolysis by DDX42 triggers RNA strand separation, whereas the ADP-bound form of the protein triggers annealing of complementary RNA strands. Required for assembly of the 17S U2 SnRNP complex of the spliceosome, a large ribonucleoprotein complex that removes introns from transcribed pre-mRNAs: DDX42 associates transiently with the SF3B subcomplex of the 17S U2 SnRNP complex and is released after fulfilling its role in the assembly of 17S U2 SnRNP. The chain is ATP-dependent RNA helicase DDX42 (DDX42) from Gallus gallus (Chicken).